The sequence spans 561 residues: Putative transport protein YbjL (561 aa).

A run of 5 helical transmembrane segments spans residues 8-28 (LLNG…LCLG), 32-52 (LGSI…LLGQ), 66-86 (FMLF…SIFF), 94-114 (MLAL…GKLF), and 158-178 (NLSL…IVGA). RCK C-terminal domains are found at residues 200-288 (RGLD…SFRN) and 292-373 (VFDR…RIGF). 5 helical membrane-spanning segments follow: residues 383 to 403 (LLAF…TFQF), 406 to 426 (FSFG…LGFM), 451 to 471 (VFMA…LGAI), 475 to 495 (MLIA…LFGA), and 540 to 560 (AIAN…WPGL).

This sequence belongs to the AAE transporter (TC 2.A.81) family. YbjL subfamily.

It localises to the cell membrane. The polypeptide is Putative transport protein YbjL (Escherichia coli O127:H6 (strain E2348/69 / EPEC)).